The following is a 194-amino-acid chain: Inosine triphosphate pyrophosphatase (194 aa).

Residue 10-15 (TSSKKK) participates in ITP binding. Glu-37 is a Mg(2+) binding site. ITP contacts are provided by residues Lys-49, 65–66 (DV), Lys-82, 142–145 (FGWD), Lys-166, and 171–172 (HR).

It belongs to the HAM1 NTPase family. As to quaternary structure, homodimer. Mg(2+) serves as cofactor. The cofactor is Mn(2+).

It is found in the cytoplasm. The catalysed reaction is ITP + H2O = IMP + diphosphate + H(+). The enzyme catalyses dITP + H2O = dIMP + diphosphate + H(+). It carries out the reaction XTP + H2O = XMP + diphosphate + H(+). Functionally, pyrophosphatase that hydrolyzes non-canonical purine nucleotides such as inosine triphosphate (ITP), deoxyinosine triphosphate (dITP) or xanthosine 5'-triphosphate (XTP) to their respective monophosphate derivatives. The enzyme does not distinguish between the deoxy- and ribose forms. Probably excludes non-canonical purines from RNA and DNA precursor pools, thus preventing their incorporation into RNA and DNA and avoiding chromosomal lesions. This is Inosine triphosphate pyrophosphatase from Giardia intestinalis (strain ATCC 50803 / WB clone C6) (Giardia lamblia).